Consider the following 1158-residue polypeptide: ATP-dependent helicase/deoxyribonuclease subunit B (1158 aa).

The protein belongs to the helicase family. AddB/RexB type 2 subfamily. In terms of assembly, heterodimer of AddA and RexB. Mg(2+) is required as a cofactor.

Its function is as follows. The heterodimer acts as both an ATP-dependent DNA helicase and an ATP-dependent, dual-direction single-stranded exonuclease. Recognizes the chi site generating a DNA molecule suitable for the initiation of homologous recombination. This subunit has 5' -&gt; 3' nuclease activity but not helicase activity. The polypeptide is ATP-dependent helicase/deoxyribonuclease subunit B (Lactobacillus gasseri (strain ATCC 33323 / DSM 20243 / BCRC 14619 / CIP 102991 / JCM 1131 / KCTC 3163 / NCIMB 11718 / NCTC 13722 / AM63)).